Reading from the N-terminus, the 162-residue chain is L-amino acid N-acetyltransferase AaaT (162 aa).

Residues 4 to 162 (IVIRHAETRD…VDAYYMARVK (159 aa)) form the N-acetyltransferase domain.

The protein belongs to the acetyltransferase family.

The enzyme catalyses L-phenylalanine + acetyl-CoA = N-acetyl-L-phenylalanine + CoA + H(+). It carries out the reaction L-methionine + acetyl-CoA = N-acetyl-L-methionine + CoA + H(+). Catalyzes the N-acetylation of L-phenylalanine and L-methionine using acetyl-CoA as acetyl donor in vitro. Cannot accept L-tyrosine as substrate and propionyl-CoA, succinyl-CoA or (S)-methylmalonyl-CoA as acyl donors. Is also able to acetylate and thus detoxify several nonhydrolyzable aminoacyl adenylates, but not the processed form of the peptide-nucleotide antibiotic microcin C (McC). When overproduced, provides complete resistance to leucyl sulfamoyl adenylate (LSA) and partial resistance to alanyl sulfamoyl adenylate (ASA) and phenylalanyl sulfamoyl adenylate (FSA). Therefore, may protect bacteria from various toxic aminoacyl nucleotides, either exogenous or those generated inside the cell during normal metabolism. The sequence is that of L-amino acid N-acetyltransferase AaaT from Escherichia coli (strain K12).